The sequence spans 169 residues: Centrosomal protein 20 (169 aa).

Positions 1–104 (MATVGDLKAV…VVEDLNSQSV (104 aa)) are necessary and sufficient for homooligomerization and localization to centrosomes and pericentriolar satellites. Residues 49-81 (ENLLINELIREYLAFNKYSYTSSVLTAETGLSE) form the LisH domain. The disordered stretch occupies residues 135–169 (TFRNIPRGRNTKDTHSGPVQLTQTSTEDWHQRRHR). The segment covering 151–160 (GPVQLTQTST) has biased composition (polar residues).

This sequence belongs to the CEP43 family. Homooligomer; probably required for localization to centrosomes.

The protein resides in the cell projection. It is found in the cilium. It localises to the cytoplasm. Its subcellular location is the cytoskeleton. The protein localises to the cilium basal body. The protein resides in the microtubule organizing center. It is found in the centrosome. It localises to the cytoplasmic granule. Its subcellular location is the centriolar satellite. Involved in the biogenesis of cilia. Required for the recruitment of PLK1 to centrosomes and S phase progression. This Xenopus laevis (African clawed frog) protein is Centrosomal protein 20 (Cep20).